The sequence spans 1486 residues: Chromosome partition protein MukB (1486 aa).

34 to 41 (GGNGAGKS) lines the ATP pocket. Coiled-coil stretches lie at residues 326-418 (LEAD…QYNQ), 444-480 (LETFQAKELEATEKMLSLEQKMSMAQTAHSQFEQAYQ), and 509-603 (RHLA…RAPV). The segment at 666-783 (PGGSEDQRLN…EVPLFGRAAR (118 aa)) is flexible hinge. Coiled-coil stretches lie at residues 835–923 (EAEI…AKLE), 977–1115 (EMLS…TAKA), and 1209–1266 (VEAI…QNVS).

The protein belongs to the SMC family. MukB subfamily. In terms of assembly, homodimerization via its hinge domain. Binds to DNA via its C-terminal region. Interacts, and probably forms a ternary complex, with MukE and MukF via its C-terminal region. The complex formation is stimulated by calcium or magnesium. Interacts with tubulin-related protein FtsZ.

Its subcellular location is the cytoplasm. The protein localises to the nucleoid. In terms of biological role, plays a central role in chromosome condensation, segregation and cell cycle progression. Functions as a homodimer, which is essential for chromosome partition. Involved in negative DNA supercoiling in vivo, and by this means organize and compact chromosomes. May achieve or facilitate chromosome segregation by condensation DNA from both sides of a centrally located replisome during cell division. This is Chromosome partition protein MukB from Shigella boydii serotype 4 (strain Sb227).